Consider the following 346-residue polypeptide: Protein RecA (346 aa).

67-74 contacts ATP; the sequence is GPESSGKT.

Belongs to the RecA family.

It localises to the cytoplasm. Its function is as follows. Can catalyze the hydrolysis of ATP in the presence of single-stranded DNA, the ATP-dependent uptake of single-stranded DNA by duplex DNA, and the ATP-dependent hybridization of homologous single-stranded DNAs. It interacts with LexA causing its activation and leading to its autocatalytic cleavage. The protein is Protein RecA of Saccharopolyspora erythraea (strain ATCC 11635 / DSM 40517 / JCM 4748 / NBRC 13426 / NCIMB 8594 / NRRL 2338).